We begin with the raw amino-acid sequence, 679 residues long: DNA-directed RNA polymerase subunit beta' (679 aa).

Zn(2+) contacts are provided by cysteine 69, cysteine 71, cysteine 84, and cysteine 87. Mg(2+) contacts are provided by aspartate 486, aspartate 488, and aspartate 490.

The protein belongs to the RNA polymerase beta' chain family. RpoC1 subfamily. As to quaternary structure, in plastids the minimal PEP RNA polymerase catalytic core is composed of four subunits: alpha, beta, beta', and beta''. When a (nuclear-encoded) sigma factor is associated with the core the holoenzyme is formed, which can initiate transcription. Requires Mg(2+) as cofactor. It depends on Zn(2+) as a cofactor.

It localises to the plastid. Its subcellular location is the chloroplast. It catalyses the reaction RNA(n) + a ribonucleoside 5'-triphosphate = RNA(n+1) + diphosphate. Functionally, DNA-dependent RNA polymerase catalyzes the transcription of DNA into RNA using the four ribonucleoside triphosphates as substrates. This Physcomitrium patens (Spreading-leaved earth moss) protein is DNA-directed RNA polymerase subunit beta'.